The sequence spans 230 residues: Leucyl/phenylalanyl-tRNA--protein transferase (230 aa).

Belongs to the L/F-transferase family.

The protein resides in the cytoplasm. The catalysed reaction is N-terminal L-lysyl-[protein] + L-leucyl-tRNA(Leu) = N-terminal L-leucyl-L-lysyl-[protein] + tRNA(Leu) + H(+). It catalyses the reaction N-terminal L-arginyl-[protein] + L-leucyl-tRNA(Leu) = N-terminal L-leucyl-L-arginyl-[protein] + tRNA(Leu) + H(+). The enzyme catalyses L-phenylalanyl-tRNA(Phe) + an N-terminal L-alpha-aminoacyl-[protein] = an N-terminal L-phenylalanyl-L-alpha-aminoacyl-[protein] + tRNA(Phe). In terms of biological role, functions in the N-end rule pathway of protein degradation where it conjugates Leu, Phe and, less efficiently, Met from aminoacyl-tRNAs to the N-termini of proteins containing an N-terminal arginine or lysine. This is Leucyl/phenylalanyl-tRNA--protein transferase from Rhodopseudomonas palustris (strain BisB18).